Here is a 244-residue protein sequence, read N- to C-terminus: tRNA (guanine-N(7)-)-methyltransferase (244 aa).

Polar residues predominate over residues 1–10 (MSDTPQSPAQ). The interval 1–20 (MSDTPQSPAQDSLAEHDEAR) is disordered. The S-adenosyl-L-methionine site is built by Glu74, Glu99, Asp126, and Asp149. Asp149 is a catalytic residue. Substrate-binding positions include Lys153, Asp185, and 222 to 225 (TKFE).

Belongs to the class I-like SAM-binding methyltransferase superfamily. TrmB family.

It carries out the reaction guanosine(46) in tRNA + S-adenosyl-L-methionine = N(7)-methylguanosine(46) in tRNA + S-adenosyl-L-homocysteine. Its pathway is tRNA modification; N(7)-methylguanine-tRNA biosynthesis. Its function is as follows. Catalyzes the formation of N(7)-methylguanine at position 46 (m7G46) in tRNA. The protein is tRNA (guanine-N(7)-)-methyltransferase of Pseudomonas aeruginosa (strain ATCC 15692 / DSM 22644 / CIP 104116 / JCM 14847 / LMG 12228 / 1C / PRS 101 / PAO1).